A 150-amino-acid polypeptide reads, in one-letter code: Helix-loop-helix protein hlh-12 (150 aa).

Residues 1–24 are disordered; that stretch reads MAKKPRVTKLNTDRRSRANERERQ. A compositionally biased stretch (basic and acidic residues) spans 11–24; that stretch reads NTDRRSRANERERQ. The tract at residues 13-26 is basic motif; sequence DRRSRANERERQRV. Residues 13–65 form the bHLH domain; that stretch reads DRRSRANERERQRVSEMNGMFDVLLNLLPPSHFKTRLSRVQILREATSYIIRL. The tract at residues 27-65 is helix-loop-helix motif; that stretch reads SEMNGMFDVLLNLLPPSHFKTRLSRVQILREATSYIIRL.

As to quaternary structure, forms a heterodimer with helix-loop-helix protein hlh-2.

Its subcellular location is the nucleus. Functionally, transcription factor which binds the E box motif 5'-GCAGGTG-3'. Involved in migration of the gonadal leader cells; distal tip cells (DTCs) in hermaphrodites, and linker cells in males. Positively regulates expression of alpha integrin ina-1 and ADAMTS protease gon-1. In Caenorhabditis elegans, this protein is Helix-loop-helix protein hlh-12.